We begin with the raw amino-acid sequence, 640 residues long: Biosynthetic arginine decarboxylase (640 aa).

Lys109 is subject to N6-(pyridoxal phosphate)lysine. Leu291–Tyr301 serves as a coordination point for substrate.

Belongs to the Orn/Lys/Arg decarboxylase class-II family. SpeA subfamily. Requires Mg(2+) as cofactor. It depends on pyridoxal 5'-phosphate as a cofactor.

It carries out the reaction L-arginine + H(+) = agmatine + CO2. Its pathway is amine and polyamine biosynthesis; agmatine biosynthesis; agmatine from L-arginine: step 1/1. Catalyzes the biosynthesis of agmatine from arginine. In Synechococcus sp. (strain RCC307), this protein is Biosynthetic arginine decarboxylase.